A 450-amino-acid chain; its full sequence is Probable ECA polymerase (450 aa).

Helical transmembrane passes span 6-26 (FSGL…LTWF), 37-57 (VFFS…TSVL), 63-83 (VGVA…CFYA), 118-138 (VILM…NGFL), 155-175 (GVAL…VYFL), 181-201 (AWLF…MIVG), 207-227 (IIIA…ISLW), 228-248 (MLAA…LKRY), 341-361 (LVVM…GLII), 378-398 (YKAA…IVLA), and 410-430 (VFFI…YWLF).

The protein belongs to the WzyE family. As to quaternary structure, probably part of a complex composed of WzxE, WzyE and WzzE.

It is found in the cell inner membrane. It functions in the pathway bacterial outer membrane biogenesis; enterobacterial common antigen biosynthesis. Functionally, probably involved in the polymerization of enterobacterial common antigen (ECA) trisaccharide repeat units. The protein is Probable ECA polymerase of Escherichia coli O7:K1 (strain IAI39 / ExPEC).